A 359-amino-acid chain; its full sequence is Stearoyl-CoA desaturase (359 aa).

At 1 to 72 (MPAHLLQEEI…EGPKPKLEYV (72 aa)) the chain is on the cytoplasmic side. Residues 73-93 (WRNIILMSLLHLGALYGITLI) traverse the membrane as a helical segment. Asparagine 75 is a substrate binding site. At 94-97 (PTCK) the chain is on the lumenal side. The helical transmembrane segment at 98–118 (IYTYIWVLFYYLMGALGITAG) threads the bilayer. Residues 119-217 (AHRLWSHRTY…EKLVMFQRRY (99 aa)) lie on the Cytoplasmic side of the membrane. Positions 120 and 125 each coordinate Fe cation. Residues 120–125 (HRLWSH) carry the Histidine box-1 motif. The substrate site is built by asparagine 148, arginine 155, and aspartate 156. 3 residues coordinate Fe cation: histidine 157, histidine 160, and histidine 161. Positions 157–161 (HRAHH) match the Histidine box-2 motif. The substrate site is built by arginine 188 and lysine 189. Serine 198 and serine 203 each carry phosphoserine. The chain crosses the membrane as a helical span at residues 218-237 (YKPGVLLLCFILPTLVPWYL). The Lumenal segment spans residues 238–241 (WDET). A helical membrane pass occupies residues 242–263 (FQNSLFFATLFRYALGLNVTWL). Position 262 (tryptophan 262) interacts with substrate. The Cytoplasmic portion of the chain corresponds to 264 to 359 (VNSAAHMYGY…RTGEESYKSG (96 aa)). Fe cation-binding residues include histidine 269, histidine 298, histidine 301, and histidine 302. The short motif at 298 to 302 (HNYHH) is the Histidine box-3 element.

Belongs to the fatty acid desaturase type 1 family. Fe(2+) is required as a cofactor.

It is found in the endoplasmic reticulum membrane. The enzyme catalyses octadecanoyl-CoA + 2 Fe(II)-[cytochrome b5] + O2 + 2 H(+) = (9Z)-octadecenoyl-CoA + 2 Fe(III)-[cytochrome b5] + 2 H2O. It catalyses the reaction hexadecanoyl-CoA + 2 Fe(II)-[cytochrome b5] + O2 + 2 H(+) = (9Z)-hexadecenoyl-CoA + 2 Fe(III)-[cytochrome b5] + 2 H2O. In terms of biological role, stearoyl-CoA desaturase that utilizes O(2) and electrons from reduced cytochrome b5 to introduce the first double bond into saturated fatty acyl-CoA substrates. Catalyzes the insertion of a cis double bond at the delta-9 position into fatty acyl-CoA substrates including palmitoyl-CoA and stearoyl-CoA. Gives rise to a mixture of 16:1 and 18:1 unsaturated fatty acids. Plays an important role in lipid biosynthesis. Plays an important role in regulating the expression of genes that are involved in lipogenesis and in regulating mitochondrial fatty acid oxidation. Plays an important role in body energy homeostasis. Contributes to the biosynthesis of membrane phospholipids, cholesterol esters and triglycerides. The chain is Stearoyl-CoA desaturase (SCD) from Bos taurus (Bovine).